The primary structure comprises 217 residues: Somatotropin (217 aa).

The signal sequence occupies residues 1-27 (MMAAGPRTSLLLAFTLLCLPWTQVVGA). His-46 is a binding site for Zn(2+). A disulfide bridge connects residues Cys-79 and Cys-190. Ser-132 is modified (phosphoserine). Glu-199 lines the Zn(2+) pocket. A disulfide bond links Cys-207 and Cys-215.

This sequence belongs to the somatotropin/prolactin family.

The protein resides in the secreted. Its function is as follows. Plays an important role in growth control. Its major role in stimulating body growth is to stimulate the liver and other tissues to secrete IGF1. It stimulates both the differentiation and proliferation of myoblasts. It also stimulates amino acid uptake and protein synthesis in muscle and other tissues. This Capra hircus (Goat) protein is Somatotropin (GH1).